Here is a 290-residue protein sequence, read N- to C-terminus: BEL1-like homeodomain protein 11 (290 aa).

Positions 20 to 36 (SRYAKAVQCLVEEVIDI) are SR/KY domain. Positions 81-152 (ENHEIHIKIT…SLEEAIISQL (72 aa)) are BELL domain. Positions 202 to 264 (AWKPIRGLPE…NARVRLWKPM (63 aa)) form a DNA-binding region, homeobox.

This sequence belongs to the TALE/BELL homeobox family. As to quaternary structure, may form heterodimeric complexes with TALE/KNOX proteins.

The protein localises to the nucleus. This chain is BEL1-like homeodomain protein 11 (BLH11), found in Arabidopsis thaliana (Mouse-ear cress).